The chain runs to 415 residues: BTB/POZ and MATH domain-containing protein 6 (415 aa).

Residues 1 to 33 (MSKLMTRTSGSSSPNTIPDQIESPTSSRSVTQT) form a disordered region. Positions 35–169 (NGSHQFVIQG…DDCLKINCTV (135 aa)) constitute an MATH domain. The BTB domain maps to 205–271 (SDVTFDVAGE…MYKDSLPGDV (67 aa)). The segment at 385 to 415 (SSSGGGKSQSVWAQLSNGGETSSRRVRQRTT) is disordered. The span at 392–405 (SQSVWAQLSNGGET) shows a compositional bias: polar residues.

Belongs to the Tdpoz family. Heterodimer with BPM1. Interacts with RAP2-4. Interacts with CUL3A. Binds to MYB56 at the promoter of FLOWERING LOCUS T (FT). Ubiquitous.

It localises to the nucleus. The protein resides in the cytoplasm. The protein operates within protein modification; protein ubiquitination. Its function is as follows. May act as a substrate-specific adapter of an E3 ubiquitin-protein ligase complex (CUL3-RBX1-BTB) which mediates the ubiquitination and subsequent proteasomal degradation of target proteins. The chain is BTB/POZ and MATH domain-containing protein 6 (BPM6) from Arabidopsis thaliana (Mouse-ear cress).